We begin with the raw amino-acid sequence, 36 residues long: Potassium channel toxin alpha-KTx 2.7 (36 aa).

3 cysteine pairs are disulfide-bonded: Cys-7/Cys-29, Cys-13/Cys-34, and Cys-17/Cys-36.

It belongs to the short scorpion toxin superfamily. Potassium channel inhibitor family. Alpha-KTx 02 subfamily. As to expression, expressed by the venom gland.

The protein resides in the secreted. Its function is as follows. Inhibitor of voltage-gated potassium channels (Kv). This protein is capable of displacing the binding of radio-labeled noxiustoxin (AC P08815) to rat brain synaptosomes with high affinity (about 100 pM). It is also capable of inhibiting transient potassium-currents (resembling I(A)-type currents), in cultured rat cerebellar granule cells. About 50% of the peak currents are reduced by application of a 1.5 uM solution of this toxin. Is lethal to mice (when less than 100 ug are injected). In Centruroides limpidus (Mexican scorpion), this protein is Potassium channel toxin alpha-KTx 2.7.